A 32-amino-acid chain; its full sequence is Yop proteins translocation protein A (32 aa).

This chain is Yop proteins translocation protein A (yscA), found in Yersinia enterocolitica serotype O:8 / biotype 1B (strain NCTC 13174 / 8081).